A 645-amino-acid polypeptide reads, in one-letter code: Pro-neuregulin-1, membrane-bound isoform (645 aa).

A propeptide spanning residues 1 to 19 (MSERKEGRGKGKGKKKDRG) is cleaved from the precursor. Positions 1–52 (MSERKEGRGKGKGKKKDRGSRGKPAPAEGDPSPALPPRLKEMKSQESAAGSK) are disordered. The Extracellular portion of the chain corresponds to 20-247 (SRGKPAPAEG…MEAEELYQKR (228 aa)). In terms of domain architecture, Ig-like C2-type spans 37–128 (PRLKEMKSQE…GNDSASANIT (92 aa)). A disulfide bridge links Cys-57 with Cys-112. Residues 139 to 164 (MSASTERPYVSSESPIRISVSTEGAN) show a composition bias toward polar residues. Positions 139 to 175 (MSASTERPYVSSESPIRISVSTEGANTSSSTSTSTTG) are disordered. Residues 165-175 (TSSSTSTSTTG) show a composition bias toward low complexity. An EGF-like domain is found at 178-222 (HLIKCAEKEKTFCVNGGECFMVKDLSNPSRYLCKCPNEFTGDRCQ). Disulfide bonds link Cys-182-Cys-196, Cys-190-Cys-210, and Cys-212-Cys-221. The helical transmembrane segment at 248–268 (VLTITGICIALLVVGIMCVVA) threads the bilayer. Residues 269–645 (YCKTKKQRQK…VIANQDPIAV (377 aa)) are Cytoplasmic-facing. Over residues 340 to 355 (SHYTSTAHHSTTVTQT) the composition is skewed to low complexity. Disordered regions lie at residues 340–364 (SHYTSTAHHSTTVTQTPSHSWSNGH), 380–406 (SVENSRHSSPAGGPRGRLHGLGGPREC), 433–463 (MTTPARMSPVDFHTPSSPKSPPSEMSPPVSS), and 531–593 (ETTQ…DTPF). Gly residues predominate over residues 392-402 (GPRGRLHGLGG). A compositionally biased stretch (basic residues) spans 547-557 (TNSRRAKRTKP). The span at 568–579 (DSNPSSVSSNSE) shows a compositional bias: low complexity.

It belongs to the neuregulin family. In terms of assembly, the cytoplasmic domain interacts with the LIM domain region of LIMK1. Forms a ternary complex with ERBB3 and ITGAV:ITGB3 or ITGA6:ITGB4. Interacts with NRDC and BACE1. Post-translationally, proteolytic cleavage close to the plasma membrane on the external face leads to the release of the soluble growth factor form. N- and O-glycosylated. Extensive glycosylation precedes the proteolytic cleavage.

Its subcellular location is the cell membrane. It localises to the secreted. Functionally, direct ligand for ERBB3 and ERBB4 tyrosine kinase receptors. Concomitantly recruits ERBB1 and ERBB2 coreceptors, resulting in ligand-stimulated tyrosine phosphorylation and activation of the ERBB receptors. Perform diverse functions such as inducing growth and differentiation of epithelial, glial, neuronal, and skeletal muscle cells; inducing expression of acetylcholine receptor in synaptic vesicles during the formation of the neuromuscular junction; stimulating lobuloalveolar budding and milk production in the mammary gland and inducing differentiation of mammary tumor cells; stimulating Schwann cell proliferation; implication in the development of the myocardium such as trabeculation of the developing heart. Binds to ERBB4 and ERBB3. Acts as a ligand for integrins and binds (via EGF domain) to integrins ITGAV:ITGB3 or ITGA6:ITGB4. Its binding to integrins and subsequent ternary complex formation with integrins and ERRB3 are essential for NRG1-ERBB signaling. Induces the phosphorylation and activation of MAPK3/ERK1, MAPK1/ERK2 and AKT1, and ligand-dependent ERBB4 endocytosis is essential for the NRG1-mediated activation of these kinases in neurons. This Mus musculus (Mouse) protein is Pro-neuregulin-1, membrane-bound isoform.